A 67-amino-acid polypeptide reads, in one-letter code: ATP synthase F(0) complex subunit 8 (67 aa).

Residues 8 to 24 (TWFTTIVAMILSLFILM) traverse the membrane as a helical segment. K54 carries the post-translational modification N6-acetyllysine; alternate. Residue K54 is modified to N6-succinyllysine; alternate. An N6-acetyllysine modification is found at K57.

Belongs to the ATPase protein 8 family. Component of the ATP synthase complex composed at least of ATP5F1A/subunit alpha, ATP5F1B/subunit beta, ATP5MC1/subunit c (homooctomer), MT-ATP6/subunit a, MT-ATP8/subunit 8, ATP5ME/subunit e, ATP5MF/subunit f, ATP5MG/subunit g, ATP5MK/subunit k, ATP5MJ/subunit j, ATP5F1C/subunit gamma, ATP5F1D/subunit delta, ATP5F1E/subunit epsilon, ATP5PF/subunit F6, ATP5PB/subunit b, ATP5PD/subunit d, ATP5PO/subunit OSCP. ATP synthase complex consists of a soluble F(1) head domain (subunits alpha(3) and beta(3)) - the catalytic core - and a membrane F(0) domain - the membrane proton channel (subunits c, a, 8, e, f, g, k and j). These two domains are linked by a central stalk (subunits gamma, delta, and epsilon) rotating inside the F1 region and a stationary peripheral stalk (subunits F6, b, d, and OSCP). Interacts with PRICKLE3.

It localises to the mitochondrion membrane. In terms of biological role, subunit 8, of the mitochondrial membrane ATP synthase complex (F(1)F(0) ATP synthase or Complex V) that produces ATP from ADP in the presence of a proton gradient across the membrane which is generated by electron transport complexes of the respiratory chain. ATP synthase complex consist of a soluble F(1) head domain - the catalytic core - and a membrane F(1) domain - the membrane proton channel. These two domains are linked by a central stalk rotating inside the F(1) region and a stationary peripheral stalk. During catalysis, ATP synthesis in the catalytic domain of F(1) is coupled via a rotary mechanism of the central stalk subunits to proton translocation. In vivo, can only synthesize ATP although its ATP hydrolase activity can be activated artificially in vitro. Part of the complex F(0) domain. In Oryctolagus cuniculus (Rabbit), this protein is ATP synthase F(0) complex subunit 8.